The chain runs to 261 residues: Immediate-early protein IE-0 (261 aa).

The segment at C212–R257 adopts an RING-type zinc-finger fold.

As to quaternary structure, interacts with proteins C42 and FP25. Interacts with host beta-tubulin. Interacts with Ac66 and vUb.

The protein resides in the host nucleus. The protein localises to the host cytoplasm. Its subcellular location is the virion. In terms of biological role, putative viral E3 ligase that plays an essential regulatory role in both viral DNA replication and transcriptional transactivation. The role in transcription has been shown to include activation of gene expression from early viral promoters. Also promotes the efficient egress of nucleocapsids from the host nucleus. May act as an E3 ligase that promotes ubiquitination of nucleocapsids proteins by vUbi and subsequent viral egress for the host nucleus. The chain is Immediate-early protein IE-0 (IE0) from Lepidoptera (butterflies and moths).